The chain runs to 377 residues: Nitric oxide reductase FlRd-NAD(+) reductase (377 aa).

This sequence belongs to the FAD-dependent oxidoreductase family. FAD is required as a cofactor.

The protein localises to the cytoplasm. The catalysed reaction is 2 reduced [nitric oxide reductase rubredoxin domain] + NAD(+) + H(+) = 2 oxidized [nitric oxide reductase rubredoxin domain] + NADH. Its pathway is nitrogen metabolism; nitric oxide reduction. In terms of biological role, one of at least two accessory proteins for anaerobic nitric oxide (NO) reductase. Reduces the rubredoxin moiety of NO reductase. The polypeptide is Nitric oxide reductase FlRd-NAD(+) reductase (Shigella flexneri serotype 5b (strain 8401)).